Reading from the N-terminus, the 137-residue chain is Putative pre-16S rRNA nuclease (137 aa).

It belongs to the YqgF nuclease family.

It is found in the cytoplasm. Could be a nuclease involved in processing of the 5'-end of pre-16S rRNA. The polypeptide is Putative pre-16S rRNA nuclease (Clostridium botulinum (strain 657 / Type Ba4)).